The sequence spans 60 residues: Photosystem II reaction center protein L (60 aa).

Residues 39 to 59 form a helical membrane-spanning segment; sequence SLYWGLLLIFVLAVLFSSYIF.

This sequence belongs to the PsbL family. As to quaternary structure, PSII is composed of 1 copy each of membrane proteins PsbA, PsbB, PsbC, PsbD, PsbE, PsbF, PsbH, PsbI, PsbJ, PsbK, PsbL, PsbM, PsbT, PsbX, PsbY, PsbZ, Psb30/Ycf12, at least 3 peripheral proteins of the oxygen-evolving complex and a large number of cofactors. It forms dimeric complexes.

Its subcellular location is the plastid. It is found in the chloroplast thylakoid membrane. In terms of biological role, one of the components of the core complex of photosystem II (PSII). PSII is a light-driven water:plastoquinone oxidoreductase that uses light energy to abstract electrons from H(2)O, generating O(2) and a proton gradient subsequently used for ATP formation. It consists of a core antenna complex that captures photons, and an electron transfer chain that converts photonic excitation into a charge separation. This subunit is found at the monomer-monomer interface and is required for correct PSII assembly and/or dimerization. In Oedogonium cardiacum (Filamentous green alga), this protein is Photosystem II reaction center protein L.